We begin with the raw amino-acid sequence, 398 residues long: Nicotinate phosphoribosyltransferase (398 aa).

His-221 carries the post-translational modification Phosphohistidine; by autocatalysis.

It belongs to the NAPRTase family. In terms of processing, transiently phosphorylated on a His residue during the reaction cycle. Phosphorylation strongly increases the affinity for substrates and increases the rate of nicotinate D-ribonucleotide production. Dephosphorylation regenerates the low-affinity form of the enzyme, leading to product release.

It carries out the reaction nicotinate + 5-phospho-alpha-D-ribose 1-diphosphate + ATP + H2O = nicotinate beta-D-ribonucleotide + ADP + phosphate + diphosphate. It functions in the pathway cofactor biosynthesis; NAD(+) biosynthesis; nicotinate D-ribonucleotide from nicotinate: step 1/1. Catalyzes the synthesis of beta-nicotinate D-ribonucleotide from nicotinate and 5-phospho-D-ribose 1-phosphate at the expense of ATP. In Buchnera aphidicola subsp. Schizaphis graminum (strain Sg), this protein is Nicotinate phosphoribosyltransferase.